Reading from the N-terminus, the 64-residue chain is Large ribosomal subunit protein bL33 (64 aa).

Over residues 16 to 25 the composition is skewed to basic and acidic residues; sequence EARTSSEPRR. Positions 16–39 are disordered; sequence EARTSSEPRRSNGISRYTTEKNKR.

This sequence belongs to the bacterial ribosomal protein bL33 family.

The sequence is that of Large ribosomal subunit protein bL33 from Prochlorococcus marinus (strain MIT 9515).